Here is a 73-residue protein sequence, read N- to C-terminus: Venom peptide La1 (73 aa).

A Lysine amide modification is found at Lys73.

The protein belongs to the scorpion La1-like peptide family. Contains 4 disulfide bonds. As to expression, expressed by the venom gland.

It is found in the secreted. Functionally, not toxic to insect. The chain is Venom peptide La1 from Liocheles australasiae (Dwarf wood scorpion).